A 230-amino-acid polypeptide reads, in one-letter code: Acyl-protein thioesterase 1 (230 aa).

Residues Ser-119, Asp-174, and His-208 each act as charge relay system in the active site. At Lys-224 the chain carries N6-acetyllysine.

Belongs to the AB hydrolase superfamily. AB hydrolase 2 family. As to quaternary structure, homodimer. As to expression, platelets.

Its subcellular location is the cytoplasm. It is found in the cell membrane. It localises to the nucleus membrane. The protein localises to the endoplasmic reticulum. The enzyme catalyses S-hexadecanoyl-L-cysteinyl-[protein] + H2O = L-cysteinyl-[protein] + hexadecanoate + H(+). It carries out the reaction 1-hexadecanoyl-sn-glycero-3-phosphocholine + H2O = sn-glycerol 3-phosphocholine + hexadecanoate + H(+). It catalyses the reaction a 1-(9Z-octadecenoyl)-2-acyl-sn-glycero-3-phosphocholine + H2O = a 2-acyl-sn-glycero-3-phosphocholine + (9Z)-octadecenoate + H(+). Inhibited by palmostatin-B, leading to impair depalmitoylating of Ras. In terms of biological role, acts as an acyl-protein thioesterase. Hydrolyzes fatty acids from S-acylated cysteine residues in proteins such as trimeric G alpha proteins or HRAS. Acts as a palmitoyl thioesterase that catalyzes depalmitoylation of proteins, such as ADRB2, KCNMA1 and SQSTM1. Acts as a negative regulator of autophagy by mediating palmitoylation of SQSTM1, decreasing affinity between SQSTM1 and ATG8 proteins and recruitment of ubiquitinated cargo proteins to autophagosomes. Acts as a lysophospholipase and hydrolyzes lysophosphatidylcholine (lyso-PC). Also hydrolyzes lysophosphatidylethanolamine (lyso-PE), lysophosphatidylinositol (lyso-PI) and lysophosphatidylserine (lyso-PS). Has much higher thioesterase activity than lysophospholipase activity. Contributes to the production of lysophosphatidic acid (LPA) during blood coagulation by recognizing and cleaving plasma phospholipids to generate lysophospholipids which in turn act as substrates for ENPP2 to produce LPA. The chain is Acyl-protein thioesterase 1 (LYPLA1) from Homo sapiens (Human).